Consider the following 116-residue polypeptide: NADH-ubiquinone oxidoreductase chain 3 (116 aa).

A run of 3 helical transmembrane segments spans residues 6–26 (FMLL…FWLA), 56–76 (FFLV…LLPL), and 85–105 (PLLT…GLVY).

It belongs to the complex I subunit 3 family.

Its subcellular location is the mitochondrion membrane. The catalysed reaction is a ubiquinone + NADH + 5 H(+)(in) = a ubiquinol + NAD(+) + 4 H(+)(out). In terms of biological role, core subunit of the mitochondrial membrane respiratory chain NADH dehydrogenase (Complex I) that is believed to belong to the minimal assembly required for catalysis. Complex I functions in the transfer of electrons from NADH to the respiratory chain. The immediate electron acceptor for the enzyme is believed to be ubiquinone. This is NADH-ubiquinone oxidoreductase chain 3 (MT-ND3) from Struthio camelus (Common ostrich).